Consider the following 1036-residue polypeptide: Isoleucine--tRNA ligase (1036 aa).

The short motif at 46 to 56 is the 'HIGH' region element; that stretch reads PFATGLPHYGH. Positions 589–593 match the 'KMSKS' region motif; the sequence is KMSKR. Lysine 592 lines the ATP pocket.

It belongs to the class-I aminoacyl-tRNA synthetase family. IleS type 2 subfamily. Monomer. It depends on Zn(2+) as a cofactor.

The protein resides in the cytoplasm. The enzyme catalyses tRNA(Ile) + L-isoleucine + ATP = L-isoleucyl-tRNA(Ile) + AMP + diphosphate. Catalyzes the attachment of isoleucine to tRNA(Ile). As IleRS can inadvertently accommodate and process structurally similar amino acids such as valine, to avoid such errors it has two additional distinct tRNA(Ile)-dependent editing activities. One activity is designated as 'pretransfer' editing and involves the hydrolysis of activated Val-AMP. The other activity is designated 'posttransfer' editing and involves deacylation of mischarged Val-tRNA(Ile). This Chlamydia muridarum (strain MoPn / Nigg) protein is Isoleucine--tRNA ligase.